The primary structure comprises 232 residues: Phosphatidylserine decarboxylase proenzyme (232 aa).

The active-site Schiff-base intermediate with substrate; via pyruvic acid is S190. Residue S190 is modified to Pyruvic acid (Ser); by autocatalysis.

It belongs to the phosphatidylserine decarboxylase family. PSD-A subfamily. As to quaternary structure, heterodimer of a large membrane-associated beta subunit and a small pyruvoyl-containing alpha subunit. The cofactor is pyruvate. Is synthesized initially as an inactive proenzyme. Formation of the active enzyme involves a self-maturation process in which the active site pyruvoyl group is generated from an internal serine residue via an autocatalytic post-translational modification. Two non-identical subunits are generated from the proenzyme in this reaction, and the pyruvate is formed at the N-terminus of the alpha chain, which is derived from the carboxyl end of the proenzyme. The post-translation cleavage follows an unusual pathway, termed non-hydrolytic serinolysis, in which the side chain hydroxyl group of the serine supplies its oxygen atom to form the C-terminus of the beta chain, while the remainder of the serine residue undergoes an oxidative deamination to produce ammonia and the pyruvoyl prosthetic group on the alpha chain.

It is found in the cell membrane. The catalysed reaction is a 1,2-diacyl-sn-glycero-3-phospho-L-serine + H(+) = a 1,2-diacyl-sn-glycero-3-phosphoethanolamine + CO2. It functions in the pathway phospholipid metabolism; phosphatidylethanolamine biosynthesis; phosphatidylethanolamine from CDP-diacylglycerol: step 2/2. Its function is as follows. Catalyzes the formation of phosphatidylethanolamine (PtdEtn) from phosphatidylserine (PtdSer). This chain is Phosphatidylserine decarboxylase proenzyme, found in Rhodopseudomonas palustris (strain ATCC BAA-98 / CGA009).